Here is a 685-residue protein sequence, read N- to C-terminus: ABC transporter G family member 26 (685 aa).

The ABC transporter domain maps to 65 to 329; that stretch reads LKFEDVEYKV…FSSLRILPEI (265 aa). Residue 124–131 coordinates ATP; sequence GPSGSGKT. In terms of domain architecture, ABC transmembrane type-2 spans 414 to 623; it reads DQFLILSRRT…GFRLLLKVQY (210 aa). Transmembrane regions (helical) follow at residues 432–452, 468–488, 518–538, 542–562, 576–596, and 648–668; these read FDKLRLVQSLGVAVVLGLLWW, LMFYICIFWTSSSLFGAVYVF, MVAHVLYPTFFMIIVYFMAEF, IPCFLFTVLTILLIAITSQGA, AGMIASLVLMLFLLTGGYYVQ, and TINLNGGLQELWVLLAMAFGY.

The protein belongs to the ABC transporter superfamily. ABCG family. Eye pigment precursor importer (TC 3.A.1.204) subfamily. In terms of assembly, homo- or heterodimer. As to expression, mostly expressed in flowers, especially in tapetum within anthers.

The protein resides in the cell membrane. The protein localises to the endoplasmic reticulum membrane. In terms of biological role, mediates the transport of sporopollenin precursors (e.g. polyketides) across the tapetum plasma membrane into the anther locule for polymerization on developing microspore walls, thus being required for male fertility and pollen exine formation and patterning prior to tapetum programmed cell death. This Arabidopsis thaliana (Mouse-ear cress) protein is ABC transporter G family member 26.